Reading from the N-terminus, the 602-residue chain is Potassium-transporting ATPase potassium-binding subunit (602 aa).

Helical transmembrane passes span 5-25, 65-85, 136-156, and 179-199; these read AMLQ…PLGA, GYAV…YALQ, GLTV…IALI, and LYVL…QGAI. The interval 221–248 is disordered; it reads QDAKGNPVLGKDGKPVMEDKTSQTQTLP. The segment covering 231–241 has biased composition (basic and acidic residues); the sequence is KDGKPVMEDKT. Transmembrane regions (helical) follow at residues 283–303, 312–332, 419–439, 458–478, 523–543, and 566–586; these read LANF…CFLF, QGWA…VVET, GLYG…LMVG, AITI…AVSL, IMTG…ILAI, and LFVT…YVPA.

Belongs to the KdpA family. The system is composed of three essential subunits: KdpA, KdpB and KdpC.

It localises to the cell inner membrane. Its function is as follows. Part of the high-affinity ATP-driven potassium transport (or Kdp) system, which catalyzes the hydrolysis of ATP coupled with the electrogenic transport of potassium into the cytoplasm. This subunit binds the periplasmic potassium ions and delivers the ions to the membrane domain of KdpB through an intramembrane tunnel. In Chromobacterium violaceum (strain ATCC 12472 / DSM 30191 / JCM 1249 / CCUG 213 / NBRC 12614 / NCIMB 9131 / NCTC 9757 / MK), this protein is Potassium-transporting ATPase potassium-binding subunit.